A 550-amino-acid chain; its full sequence is Formate--tetrahydrofolate ligase (550 aa).

Residue 62 to 69 (TPAGEGKS) participates in ATP binding.

Belongs to the formate--tetrahydrofolate ligase family.

The catalysed reaction is (6S)-5,6,7,8-tetrahydrofolate + formate + ATP = (6R)-10-formyltetrahydrofolate + ADP + phosphate. Its pathway is one-carbon metabolism; tetrahydrofolate interconversion. This is Formate--tetrahydrofolate ligase from Corynebacterium diphtheriae (strain ATCC 700971 / NCTC 13129 / Biotype gravis).